Here is a 222-residue protein sequence, read N- to C-terminus: Glutathione S-transferase A2 (222 aa).

Ala2 is modified (N-acetylalanine). Positions Gly3–Gly83 constitute a GST N-terminal domain. Lys4 is subject to N6-succinyllysine. Glutathione is bound by residues Tyr9, Lys45, Gln54–Val55, and Gln67–Thr68. The GST C-terminal domain maps to Asp85–Leu208.

This sequence belongs to the GST superfamily. Alpha family. Homodimer. Heterodimer of GSTA1 and GSTA2. Expressed in the kidney.

It catalyses the reaction RX + glutathione = an S-substituted glutathione + a halide anion + H(+). Its function is as follows. Catalyzes the conjugation of glutathione to a large variety of electrophilic compounds. This chain is Glutathione S-transferase A2 (Gsta2), found in Mus musculus (Mouse).